We begin with the raw amino-acid sequence, 628 residues long: Dihydroxy-acid dehydratase (628 aa).

Residue Asp-80 participates in Mg(2+) binding. Cys-121 provides a ligand contact to [2Fe-2S] cluster. The Mg(2+) site is built by Asp-122 and Lys-123. At Lys-123 the chain carries N6-carboxylysine. Cys-207 contributes to the [2Fe-2S] cluster binding site. A Mg(2+)-binding site is contributed by Glu-503. The active-site Proton acceptor is the Ser-529.

The protein belongs to the IlvD/Edd family. As to quaternary structure, homodimer. The cofactor is [2Fe-2S] cluster. Requires Mg(2+) as cofactor.

The enzyme catalyses (2R)-2,3-dihydroxy-3-methylbutanoate = 3-methyl-2-oxobutanoate + H2O. The catalysed reaction is (2R,3R)-2,3-dihydroxy-3-methylpentanoate = (S)-3-methyl-2-oxopentanoate + H2O. Its pathway is amino-acid biosynthesis; L-isoleucine biosynthesis; L-isoleucine from 2-oxobutanoate: step 3/4. The protein operates within amino-acid biosynthesis; L-valine biosynthesis; L-valine from pyruvate: step 3/4. Functionally, functions in the biosynthesis of branched-chain amino acids. Catalyzes the dehydration of (2R,3R)-2,3-dihydroxy-3-methylpentanoate (2,3-dihydroxy-3-methylvalerate) into 2-oxo-3-methylpentanoate (2-oxo-3-methylvalerate) and of (2R)-2,3-dihydroxy-3-methylbutanoate (2,3-dihydroxyisovalerate) into 2-oxo-3-methylbutanoate (2-oxoisovalerate), the penultimate precursor to L-isoleucine and L-valine, respectively. The polypeptide is Dihydroxy-acid dehydratase (Psychrobacter arcticus (strain DSM 17307 / VKM B-2377 / 273-4)).